A 154-amino-acid polypeptide reads, in one-letter code: Cyanate hydratase (154 aa).

Catalysis depends on residues Arg100, Glu103, and Ser126.

It belongs to the cyanase family.

The enzyme catalyses cyanate + hydrogencarbonate + 3 H(+) = NH4(+) + 2 CO2. In terms of biological role, catalyzes the reaction of cyanate with bicarbonate to produce ammonia and carbon dioxide. In Aspergillus fumigatus (strain ATCC MYA-4609 / CBS 101355 / FGSC A1100 / Af293) (Neosartorya fumigata), this protein is Cyanate hydratase.